We begin with the raw amino-acid sequence, 128 residues long: Glycine cleavage system H protein (128 aa).

The region spanning 23 to 105 (KVRIGITDFA…YEKAWMIVVE (83 aa)) is the Lipoyl-binding domain. N6-lipoyllysine is present on K64.

The protein belongs to the GcvH family. The glycine cleavage system is composed of four proteins: P, T, L and H. Requires (R)-lipoate as cofactor.

In terms of biological role, the glycine cleavage system catalyzes the degradation of glycine. The H protein shuttles the methylamine group of glycine from the P protein to the T protein. Functionally, is also involved in protein lipoylation via its role as an octanoyl/lipoyl carrier protein intermediate. The chain is Glycine cleavage system H protein from Halalkalibacterium halodurans (strain ATCC BAA-125 / DSM 18197 / FERM 7344 / JCM 9153 / C-125) (Bacillus halodurans).